Reading from the N-terminus, the 133-residue chain is NADH dehydrogenase [ubiquinone] 1 alpha subcomplex subunit 6 (133 aa).

Belongs to the complex I LYR family. In terms of assembly, complex I is composed of at least 49 different subunits.

Its subcellular location is the mitochondrion inner membrane. In terms of biological role, accessory subunit of the mitochondrial membrane respiratory chain NADH dehydrogenase (Complex I), that is believed to be not involved in catalysis. Complex I functions in the transfer of electrons from NADH to the respiratory chain. The immediate electron acceptor for the enzyme is believed to be ubiquinone. The sequence is that of NADH dehydrogenase [ubiquinone] 1 alpha subcomplex subunit 6 from Arabidopsis thaliana (Mouse-ear cress).